The following is a 90-amino-acid chain: Probable Fe(2+)-trafficking protein (90 aa).

It belongs to the Fe(2+)-trafficking protein family.

Its function is as follows. Could be a mediator in iron transactions between iron acquisition and iron-requiring processes, such as synthesis and/or repair of Fe-S clusters in biosynthetic enzymes. This chain is Probable Fe(2+)-trafficking protein, found in Delftia acidovorans (strain DSM 14801 / SPH-1).